The primary structure comprises 856 residues: V-type proton ATPase subunit a (856 aa).

The Cytoplasmic segment spans residues 1–409; it reads MAPKQDTPFR…NAYGTATYQE (409 aa). The chain crosses the membrane as a helical span at residues 410 to 428; it reads VNPAIPVIVTFPFLFAVMF. The Vacuolar segment spans residues 429-430; it reads GD. Residues 431–447 traverse the membrane as a helical segment; that stretch reads FGHALIMLCAALAMIYW. Residues 448–460 are Cytoplasmic-facing; that stretch reads EKPLKKVTFELFA. The helical transmembrane segment at 461–490 threads the bilayer; the sequence is MVFYGRYIVLVMAVFSVYTGLIYNDVFSKS. Over 491 to 544 the chain is Vacuolar; the sequence is MTLFDSQWKWVVPENFKEGMTVKAVLREPNGYRYPFGLDWRWHGTENELLFINS. Residues 545–564 traverse the membrane as a helical segment; the sequence is YKMKMAIILGWAHMTYSLCF. Topologically, residues 565–582 are cytoplasmic; sequence SYINARHFKRPIDIWGNF. A helical membrane pass occupies residues 583–603; it reads VPGMIFFQSIFGYLVLCIIYK. At 604–648 the chain is on the vacuolar side; sequence WSVDWFGTGRQPPGLLNMLIYMFLQPGTLDGGVELYPGQATVQVI. The chain crosses the membrane as a helical span at residues 649–668; that stretch reads LLLLAVIQVPILLFLKPFYL. The Cytoplasmic segment spans residues 669–738; the sequence is RWENNRARAK…EVMIHQVIHT (70 aa). Positions 689–710 are disordered; it reads VSALDEDDEEDPSNGDDYEGAA. A compositionally biased stretch (acidic residues) spans 692 to 707; that stretch reads LDEDDEEDPSNGDDYE. Residues 739–763 form a helical membrane-spanning segment; sequence IEFCLNSVSHTASYLRLWALSLAHQ. The Vacuolar portion of the chain corresponds to 764-784; that stretch reads QLSAVLWSMTMAKALESKGLG. The helical transmembrane segment at 785–823 threads the bilayer; that stretch reads GAIFLVVAFAMFFVLSVIILIIMEGVSAMLHSLRLAWVE. At 824 to 856 the chain is on the cytoplasmic side; the sequence is SFSKFAEFGGWPFTPFSFKQQLEESEELKEYIG.

It belongs to the V-ATPase 116 kDa subunit family. V-ATPase is a heteromultimeric enzyme composed of a peripheral catalytic V1 complex (components A to H) attached to an integral membrane V0 proton pore complex (components: a, c, c', c'', d, e, f and VOA1).

It is found in the vacuole membrane. In terms of biological role, subunit of the V0 complex of vacuolar(H+)-ATPase (V-ATPase), a multisubunit enzyme composed of a peripheral complex (V1) that hydrolyzes ATP and a membrane integral complex (V0) that translocates protons. V-ATPase is responsible for acidifying and maintaining the pH of intracellular compartments. This is V-type proton ATPase subunit a (vph-1) from Neurospora crassa (strain ATCC 24698 / 74-OR23-1A / CBS 708.71 / DSM 1257 / FGSC 987).